Here is a 191-residue protein sequence, read N- to C-terminus: uncharacterized protein (191 aa).

The N-terminal stretch at 1 to 22 is a signal peptide; that stretch reads MKSLRLMLCAMPLMLTGCSTMS.

This is an uncharacterized protein from Escherichia coli (strain K12).